The following is a 520-amino-acid chain: MKPEDFRASTQRPFTGEEYLKSLQDGREIYIYGERVKDVTTHPAFRNAAASVAQLYDALHKPEMQDSLCWNTDTGSGGYTHKFFRVAKSADDLRHERDAIAEWSRLSYGWMGRTPDYKAAFGCALGGTPGFYGQFEQNARNWYTRIQETGLYFNHAIVNPPIDRHLPTDKVKDVYIKLEKETDAGIIVSGAKVVATNSALTHYNMIGFGSAQVMGENPDFALMFVAPMDADGVKLISRASYEMVAGATGSPYDYPLSSRFDENDAILVMDNVLIPWENVLLYRDFDRCRRWTMEGGFARMYPLQACVRLAVKLDFITALLKKSLECTGTLEFRGVQADLGEVVAWRNTFWALSDSMCSEATPWVNGAYLPDHAALQTYRVLAPMAYAKIKNIIERNVTSGLIYLPSSARDLNNPQIDQYLAKYVRGSNGMDHVQRIKILKLMWDAIGSEFGGRHELYEINYSGSQDEIRLQCLRQAQSSGNMDKMMAMVDRCLSEYDQNGWTVPHLHNNDDINMLDKLLK.

The protein belongs to the FADH(2)-utilizing monooxygenase family. As to quaternary structure, 4-HPA 3-monooxygenase consists of a reductase component HpaC and an oxygenase component HpaB.

The enzyme catalyses 4-hydroxyphenylacetate + FADH2 + O2 = 3,4-dihydroxyphenylacetate + FAD + H2O + H(+). Its pathway is aromatic compound metabolism; 4-hydroxyphenylacetate degradation; pyruvate and succinate semialdehyde from 4-hydroxyphenylacetate: step 1/7. Utilizes FADH(2) supplied by HpaC or by another flavin reductase, to catalyze the hydroxylation of 4-hydroxyphenylacetic acid, leading to the production of 3,4-DHPA. Can also oxidize phenol to catechol, and hydroxylate other phenol derivatives. The protein is 4-hydroxyphenylacetate 3-monooxygenase oxygenase component (hpaB) of Escherichia coli.